Reading from the N-terminus, the 334-residue chain is CRISPR-associated protein Cas1 3 (334 aa).

Positions 165, 230, and 245 each coordinate Mn(2+).

The protein belongs to the CRISPR-associated endonuclease Cas1 family. In terms of assembly, homodimer, forms a heterotetramer with a Cas2 homodimer. Mg(2+) serves as cofactor. Mn(2+) is required as a cofactor.

CRISPR (clustered regularly interspaced short palindromic repeat), is an adaptive immune system that provides protection against mobile genetic elements (viruses, transposable elements and conjugative plasmids). CRISPR clusters contain spacers, sequences complementary to antecedent mobile elements, and target invading nucleic acids. CRISPR clusters are transcribed and processed into CRISPR RNA (crRNA). Acts as a dsDNA endonuclease. Involved in the integration of spacer DNA into the CRISPR cassette. This chain is CRISPR-associated protein Cas1 3, found in Methanobrevibacter ruminantium (strain ATCC 35063 / DSM 1093 / JCM 13430 / OCM 146 / M1) (Methanobacterium ruminantium).